Consider the following 864-residue polypeptide: Leucine--tRNA ligase (864 aa).

The short motif at 42–52 (PYPSGKLHMGH) is the 'HIGH' region element. Residues 624 to 628 (KMSKS) carry the 'KMSKS' region motif. K627 serves as a coordination point for ATP.

The protein belongs to the class-I aminoacyl-tRNA synthetase family.

The protein localises to the cytoplasm. It catalyses the reaction tRNA(Leu) + L-leucine + ATP = L-leucyl-tRNA(Leu) + AMP + diphosphate. This chain is Leucine--tRNA ligase, found in Burkholderia mallei (strain ATCC 23344).